The following is a 419-amino-acid chain: Cyclin-B2-2 (419 aa).

Residues Gln-79–Asp-116 are disordered.

The protein belongs to the cyclin family. Cyclin AB subfamily. In terms of assembly, interacts with CDKB2-1. Expressed in the intercalary meristem and the elongation zone of internodes. Expressed in adventitious roots at all nodes under submergence conditions.

Its subcellular location is the nucleus. Involved in the control of the cell cycle at the G2/M (mitosis) transition. May associate to CDKB2-1 and activate CDKB2-1 kinase to promote cell division. The polypeptide is Cyclin-B2-2 (CYCB2-2) (Oryza sativa subsp. indica (Rice)).